The sequence spans 246 residues: CD99 antigen-like protein 2 (246 aa).

The signal sequence occupies residues 1 to 25 (MVARLTTLLVCLVFSLATLVQRGYG). The Extracellular portion of the chain corresponds to 26–160 (DFDDFNLEDA…PGSGAVTDPG (135 aa)). Residues 43–156 (KQSHFSTTTR…SQDDPGSGAV (114 aa)) are disordered. Composition is skewed to low complexity over residues 49-58 (TTTRRTGTTR) and 71-81 (TTTTTKRPGTT). The segment covering 100–109 (DDRNDLDGPK) has biased composition (basic and acidic residues). A glycan (O-linked (Xyl...) (chondroitin sulfate) serine) is linked at Ser-153. Residues 161-181 (TIAGLVSALAAALLGAVSGYL) traverse the membrane as a helical segment. The Cytoplasmic segment spans residues 182 to 246 (SYQHRKFCFS…EPLAPERPRI (65 aa)). The tract at residues 223 to 246 (APPVTDSTQHSQPTEPLAPERPRI) is disordered. The segment covering 227 to 236 (TDSTQHSQPT) has biased composition (polar residues).

The protein belongs to the CD99 family. In terms of processing, O-glycosylated. In terms of tissue distribution, expressed predominantly in the ventral medullary surface of the brain, moderate expression in the cerebral cortex and cerebellum. Low expression in lung and kidney. No expression in heart, stomach, intestine and skeletal muscle.

The protein localises to the cell membrane. It localises to the cell junction. Its subcellular location is the secreted. Its function is as follows. Plays a role in a late step of leukocyte extravasation helping cells to overcome the endothelial basement membrane. Acts at the same site as, but independently of, PECAM1. Homophilic adhesion molecule, but these interactions may not be required for cell aggregation. This chain is CD99 antigen-like protein 2 (Cd99l2), found in Rattus norvegicus (Rat).